We begin with the raw amino-acid sequence, 405 residues long: MPGIAIVGAQWGDEGKGKIVDFLAPEAEYVVRYQGGANAGHTVNAKGKTFKLNLLPSGVLHEGATSILGDGMVIDPEKFIEERRNLMEGGLNPRLKISDRAHIVLPHHKYVDGRKDFVGTTGKGIGPAYADRARRVGIRFGDLLDEGVLRERIERLLEAKPNSTRDAGWATVEDGLKSLAPIREQLAPFIADTGSELRQAIKDGRKVLFEGAQATLLDLNYGTYPFVTSSHPTVGGILVGTGVNHKALHRVYGVAKAFNTRVGHGPFATEVHDEAGILRLRGDGSQPWDEYGTTTGRPRRVGWLDLELLKYAVDVNGLDGLVINKMDILGGLDEIPVCTGYDEGGQPVFKKMKGWSSTDGVTSRATLPKEAQAYLDLIEDTVQCPVVIFSAGPEREKTYGEVHWG.

GTP is bound by residues 12–18 (GDEGKGK) and 40–42 (GHT). D13 serves as the catalytic Proton acceptor. Mg(2+) contacts are provided by D13 and G40. IMP is bound by residues 13-16 (DEGK), 38-41 (NAGH), T121, R135, Q213, T228, and R297. Residue H41 is the Proton donor of the active site. Position 293–299 (293–299 (TTTGRPR)) interacts with substrate. Residues R299, 325–327 (KMD), and 390–392 (SAG) each bind GTP.

Belongs to the adenylosuccinate synthetase family. Homodimer. Mg(2+) serves as cofactor.

Its subcellular location is the cytoplasm. It carries out the reaction IMP + L-aspartate + GTP = N(6)-(1,2-dicarboxyethyl)-AMP + GDP + phosphate + 2 H(+). It participates in purine metabolism; AMP biosynthesis via de novo pathway; AMP from IMP: step 1/2. In terms of biological role, plays an important role in the de novo pathway of purine nucleotide biosynthesis. Catalyzes the first committed step in the biosynthesis of AMP from IMP. The polypeptide is Adenylosuccinate synthetase (Deinococcus radiodurans (strain ATCC 13939 / DSM 20539 / JCM 16871 / CCUG 27074 / LMG 4051 / NBRC 15346 / NCIMB 9279 / VKM B-1422 / R1)).